A 182-amino-acid chain; its full sequence is uncharacterized protein (182 aa).

Residues 40-182 (LLKTDDDDDD…EEIQRNQKGN (143 aa)) are disordered. A compositionally biased stretch (low complexity) spans 52-86 (NNININNNNATITTTSTTTTTTTTSTTKTFTISTD). A compositionally biased stretch (acidic residues) spans 87 to 100 (NYDEDVNDDQDEGD). Low complexity-rich tracts occupy residues 104-134 (NNNN…NNNN) and 148-157 (DLDFNNQNNN). Positions 165 to 182 (FLSKDDNIEEIQRNQKGN) are enriched in basic and acidic residues.

This is an uncharacterized protein from Dictyostelium discoideum (Social amoeba).